A 430-amino-acid chain; its full sequence is C-terminal-binding protein 1 (430 aa).

The segment at M1–A59 is interaction with GLIS2 1. Residues S89, I169–V174, D193, C226–N232, T253–R255, and D279 each bind NAD(+). Residue R255 is part of the active site. Residues A277–T349 form an interaction with GLIS2 2 region. Residue E284 is part of the active site. S289 is subject to Phosphoserine. H304 functions as the Proton donor in the catalytic mechanism. Residues S398–L430 are disordered. The residue at position 412 (S412) is a Phosphoserine. Residue K418 forms a Glycyl lysine isopeptide (Lys-Gly) (interchain with G-Cter in SUMO) linkage. A compositionally biased stretch (basic and acidic residues) spans P419–L430.

The protein belongs to the D-isomer specific 2-hydroxyacid dehydrogenase family. As to quaternary structure, homo- or heterodimer. Heterodimer with CTBP2. Interacts with ELK3 (via its PXDLS motif). Interacts with RBBP8 (via its PXDLS motif); the interaction is disrupted by binding to adenovirus E1A. Interacts with PNN, MECOM and ZFHX1B. Interacts with ZNF366 (via PXDLS motif). Interaction with SATB1 (non-acetylated form); the interaction stabilizes its attachment to DNA and promotes transcription repression. Interacts with PRDM16; the interaction represses white adipose tissue (WAT)-specific genes expression. Interacts with GLIS2, HIPK2, FOXP1, FOXP2, HDAC4, HDAC5, HDAC9, NRIP1 and WIZ. Interacts with ZNF217. Interacts with BCL6; the interaction is required for BCL6 transcriptional autoinhibition and inhibition of some BCL6 target genes. Interacts with IKZF4. Interacts with MCRIP1 (unphosphorylated form, via the PXDLS motif); competitively inhibiting CTBP-ZEB1 interaction. Interacts with Bassoon/BSN; this interaction targets and anchors CTBP1 to presynapses. Interacts with SIMC1. The cofactor is NAD(+). Post-translationally, the level of phosphorylation appears to be regulated during the cell cycle. Phosphorylation by HIPK2 on Ser-412 induces proteasomal degradation. In terms of processing, ADP-ribosylated; when cells are exposed to brefeldin A. Sumoylation on Lys-418 is promoted by the E3 SUMO-protein ligase CBX4.

It is found in the cytoplasm. Its subcellular location is the nucleus. The protein localises to the synapse. The protein resides in the synaptosome. Corepressor targeting diverse transcription regulators such as GLIS2 or BCL6. Has dehydrogenase activity. Involved in controlling the equilibrium between tubular and stacked structures in the Golgi complex. Functions in brown adipose tissue (BAT) differentiation. This Rattus norvegicus (Rat) protein is C-terminal-binding protein 1 (Ctbp1).